A 312-amino-acid polypeptide reads, in one-letter code: MMGRRNDTNVADFILTGLSDSEEVQMALFMLFLLIYLITMLGNVGMLLIIRLDLQLHTPMYFFLTHLSFIDLSYSTVVTPKTLANLLTSNYISFTGCFAQMFCFVFLGTAECYLLSSMAYDRYAAICSPLHYTVIMPKRLCLALITGPYVIGFMDSFVNVVSMSRLHFCDSNIIHHFFCDTSPILALSCTDTDNTEMLIFIIAGSTLMVSLITISASYVSILSTILKINSTSGKQKAFSTCVSHLLGVTIFYGTMIFTYLKPRKSYSLGRDQVAPVFYTIVIPMLNPLIYSLRNREVKNALIRVMQRRQDSR.

Topologically, residues 1–26 (MMGRRNDTNVADFILTGLSDSEEVQM) are extracellular. N-linked (GlcNAc...) asparagine glycosylation is present at Asn-6. Residues 27–47 (ALFMLFLLIYLITMLGNVGML) form a helical membrane-spanning segment. The Cytoplasmic segment spans residues 48-55 (LIIRLDLQ). The helical transmembrane segment at 56–76 (LHTPMYFFLTHLSFIDLSYST) threads the bilayer. Residues 77–99 (VVTPKTLANLLTSNYISFTGCFA) are Extracellular-facing. A disulfide bridge connects residues Cys-97 and Cys-189. Residues 100 to 120 (QMFCFVFLGTAECYLLSSMAY) form a helical membrane-spanning segment. The Cytoplasmic segment spans residues 121 to 139 (DRYAAICSPLHYTVIMPKR). Residues 140–160 (LCLALITGPYVIGFMDSFVNV) form a helical membrane-spanning segment. The Extracellular portion of the chain corresponds to 161–197 (VSMSRLHFCDSNIIHHFFCDTSPILALSCTDTDNTEM). The chain crosses the membrane as a helical span at residues 198-217 (LIFIIAGSTLMVSLITISAS). The Cytoplasmic portion of the chain corresponds to 218 to 237 (YVSILSTILKINSTSGKQKA). Residues 238-258 (FSTCVSHLLGVTIFYGTMIFT) traverse the membrane as a helical segment. The Extracellular portion of the chain corresponds to 259-271 (YLKPRKSYSLGRD). The chain crosses the membrane as a helical span at residues 272–292 (QVAPVFYTIVIPMLNPLIYSL). The Cytoplasmic portion of the chain corresponds to 293–312 (RNREVKNALIRVMQRRQDSR).

The protein belongs to the G-protein coupled receptor 1 family.

The protein resides in the cell membrane. Odorant receptor. This is Olfactory receptor 8H3 (OR8H3) from Homo sapiens (Human).